The primary structure comprises 85 residues: Large ribosomal subunit protein bL27 (85 aa).

Residues 1-22 are disordered; that stretch reads MAHKKGGGSSRNGRDSNAQRRG.

Belongs to the bacterial ribosomal protein bL27 family.

The chain is Large ribosomal subunit protein bL27 from Sorangium cellulosum (strain So ce56) (Polyangium cellulosum (strain So ce56)).